Reading from the N-terminus, the 624-residue chain is DNA mismatch repair protein MutL (624 aa).

Belongs to the DNA mismatch repair MutL/HexB family.

This protein is involved in the repair of mismatches in DNA. It is required for dam-dependent methyl-directed DNA mismatch repair. May act as a 'molecular matchmaker', a protein that promotes the formation of a stable complex between two or more DNA-binding proteins in an ATP-dependent manner without itself being part of a final effector complex. The chain is DNA mismatch repair protein MutL from Xanthomonas campestris pv. campestris (strain B100).